We begin with the raw amino-acid sequence, 659 residues long: ATP-binding cassette sub-family D member 3 (659 aa).

Residues 1–61 (MAAFSKYLTA…GKKERAVVDK (61 aa)) form an interaction with PEX19 region. N12 carries N-linked (GlcNAc...) asparagine glycosylation. K61 is subject to N6-acetyllysine. A helical transmembrane segment spans residues 84–104 (GYLVLIAVMLVSRTYCDVWMI). Residues 85 to 372 (YLVLIAVMLV…MLLRMSQALG (288 aa)) form the ABC transmembrane type-1 domain. N106 carries N-linked (GlcNAc...) asparagine glycosylation. Residues 126–146 (LLNFIAAMPLISLVNNFLKYG) traverse the membrane as a helical segment. Residue N206 is glycosylated (N-linked (GlcNAc...) asparagine). The helical transmembrane segment at 224–244 (AIGAQGPASMMAYLVVSGLFL) threads the bilayer. Residue K260 is modified to N6-acetyllysine. The chain crosses the membrane as a helical span at residues 313-333 (MGFIDSIIAKYLATVVGYLVV). K399 carries the post-translational modification N6-acetyllysine. The ABC transporter domain maps to 440-659 (IKFDHVPLAT…ITEDTVEFGS (220 aa)). An ATP-binding site is contributed by 473–480 (GPNGCGKS). K533 is modified (N6-acetyllysine). Phosphoserine is present on S659.

Belongs to the ABC transporter superfamily. ABCD family. Peroxisomal fatty acyl CoA transporter (TC 3.A.1.203) subfamily. In terms of assembly, homodimers. Can form heterodimers with ABCD1 and ABCD2. Dimerization is necessary to form an active transporter. Interacts with PEX19; mediates the targeting of ABCD3 to peroxisomes. Ubiquitinated by PEX2 during pexophagy in response to starvation, leading to its degradation.

It localises to the peroxisome membrane. The enzyme catalyses a very long-chain fatty acyl-CoA + H2O = a very long-chain fatty acid + CoA + H(+). It carries out the reaction a very long-chain fatty acid(in) + ATP + H2O = a very long-chain fatty acid(out) + ADP + phosphate + H(+). It catalyses the reaction a long-chain fatty acyl-CoA + H2O = a long-chain fatty acid + CoA + H(+). The catalysed reaction is a long-chain fatty acid(in) + ATP + H2O = a long-chain fatty acid(out) + ADP + phosphate + H(+). The enzyme catalyses pristanoyl-CoA + H2O = 2,6,10,14-tetramethylpentadecanoate + CoA + H(+). It carries out the reaction 2,6,10,14-tetramethylpentadecanoate(in) + ATP + H2O = 2,6,10,14-tetramethylpentadecanoate(out) + ADP + phosphate + H(+). It catalyses the reaction hexadecanedioyl-CoA + H2O = hexadecanedioate + CoA + H(+). The catalysed reaction is hexadecanedioate(in) + ATP + H2O = hexadecanedioate(out) + ADP + phosphate + H(+). The enzyme catalyses (5Z,8Z,11Z,14Z,17Z)-eicosapentaenoyl-CoA + H2O = (5Z,8Z,11Z,14Z,17Z)-eicosapentaenoate + CoA + H(+). It carries out the reaction (5Z,8Z,11Z,14Z,17Z)-eicosapentaenoate(in) + ATP + H2O = (5Z,8Z,11Z,14Z,17Z)-eicosapentaenoate(out) + ADP + phosphate + H(+). It catalyses the reaction (4Z,7Z,10Z,13Z,16Z,19Z)-docosahexaenoyl-CoA + H2O = (4Z,7Z,10Z,13Z,16Z,19Z)-docosahexaenoate + CoA + H(+). The catalysed reaction is (4Z,7Z,10Z,13Z,16Z,19Z)-docosahexaenoate(in) + ATP + H2O = (4Z,7Z,10Z,13Z,16Z,19Z)-docosahexaenoate(out) + ADP + phosphate + H(+). Functionally, broad substrate specificity ATP-dependent transporter of the ATP-binding cassette (ABC) family that catalyzes the transport of long-chain fatty acids (LCFA)-CoA, dicarboxylic acids-CoA, long-branched-chain fatty acids-CoA and bile acids from the cytosol to the peroxisome lumen for beta-oxydation. Has fatty acyl-CoA thioesterase and ATPase activities. Probably hydrolyzes fatty acyl-CoAs into free fatty acids prior to their ATP-dependent transport into peroxisomes. Thus, play a role in regulation of LCFAs and energy metabolism namely, in the degradation and biosynthesis of fatty acids by beta-oxidation. In Homo sapiens (Human), this protein is ATP-binding cassette sub-family D member 3.